We begin with the raw amino-acid sequence, 368 residues long: MLMSLSRRELIKKEIFDIEEYVPGRSIEEIASTYGLKPESIIKLGSNENPLGPSPKAVKALIEAAPGANIYPSADAHELREALSKYTGFPVSNIVASGPGMDGLLDGLCRIIIEKGDEVIVPIPTFSYYELPARACGAEPVFIRRNQDFSLNPEKILEAVSPRTKIIFLCSPNNPSGNLLPEADLRKIIENTDALVFVDEAYVEFADRNLAALVNEYDNVAVGRTFSKVFGLAGLRLGYGIMPEWLTKEYLRAATPFSVSLPALRAGLAALSDTEYLNKSINLAREGREYLKEKIPFKVYPSQANFVLVDVSPLKAKKVTESLLKKGIIVRPCDSFREAGDSFIRVTVGTPEQNEKVVRAFEISKSEV.

Lys-228 carries the N6-(pyridoxal phosphate)lysine modification.

Belongs to the class-II pyridoxal-phosphate-dependent aminotransferase family. Histidinol-phosphate aminotransferase subfamily. Requires pyridoxal 5'-phosphate as cofactor.

It carries out the reaction L-histidinol phosphate + 2-oxoglutarate = 3-(imidazol-4-yl)-2-oxopropyl phosphate + L-glutamate. The protein operates within amino-acid biosynthesis; L-histidine biosynthesis; L-histidine from 5-phospho-alpha-D-ribose 1-diphosphate: step 7/9. This Methanosarcina mazei (strain ATCC BAA-159 / DSM 3647 / Goe1 / Go1 / JCM 11833 / OCM 88) (Methanosarcina frisia) protein is Histidinol-phosphate aminotransferase.